A 59-amino-acid polypeptide reads, in one-letter code: Gallinacin-14 (59 aa).

Residues 1–18 (MGIFLLFLVLLAVPQAAP) form the signal peptide. 3 disulfides stabilise this stretch: C25/C54, C32/C47, and C37/C55.

The protein belongs to the beta-defensin family.

Its subcellular location is the secreted. The protein resides in the cytoplasmic granule. Its function is as follows. Has bactericidal activity. The protein is Gallinacin-14 (GAL14) of Gallus gallus (Chicken).